The sequence spans 258 residues: Tryptophan synthase alpha chain (258 aa).

Active-site proton acceptor residues include E47 and D58.

Belongs to the TrpA family. As to quaternary structure, tetramer of two alpha and two beta chains.

It catalyses the reaction (1S,2R)-1-C-(indol-3-yl)glycerol 3-phosphate + L-serine = D-glyceraldehyde 3-phosphate + L-tryptophan + H2O. The protein operates within amino-acid biosynthesis; L-tryptophan biosynthesis; L-tryptophan from chorismate: step 5/5. The alpha subunit is responsible for the aldol cleavage of indoleglycerol phosphate to indole and glyceraldehyde 3-phosphate. The sequence is that of Tryptophan synthase alpha chain from Bacillus thuringiensis (strain Al Hakam).